Reading from the N-terminus, the 362-residue chain is Peptide chain release factor 1 (362 aa).

Glutamine 236 carries the post-translational modification N5-methylglutamine.

The protein belongs to the prokaryotic/mitochondrial release factor family. In terms of processing, methylated by PrmC. Methylation increases the termination efficiency of RF1.

The protein resides in the cytoplasm. Peptide chain release factor 1 directs the termination of translation in response to the peptide chain termination codons UAG and UAA. In Lactobacillus gasseri (strain ATCC 33323 / DSM 20243 / BCRC 14619 / CIP 102991 / JCM 1131 / KCTC 3163 / NCIMB 11718 / NCTC 13722 / AM63), this protein is Peptide chain release factor 1.